Reading from the N-terminus, the 3961-residue chain is Hybrid PKS-NRPS synthetase phm1 (3961 aa).

Residues 4–436 (SEPIAIIGSA…GTNAHAIVEA (433 aa)) form the Ketosynthase family 3 (KS3) domain. Catalysis depends on for beta-ketoacyl synthase activity residues Cys-178, His-317, and His-356. A malonyl-CoA:ACP transacylase (MAT) domain region spans residues 541-867 (VFTGQGAQWP…RSKNDILELS (327 aa)). Residues 933 to 1068 (HPILGKRCLE…GTVTVTLAEP (136 aa)) form an N-terminal hotdog fold region. Positions 933-1234 (HPILGKRCLE…LELVPFTAAR (302 aa)) are dehydratase (DH) domain. Positions 933–1236 (HPILGKRCLE…LVPFTAARPE (304 aa)) constitute a PKS/mFAS DH domain. The Proton acceptor; for dehydratase activity role is filled by His-966. The C-terminal hotdog fold stretch occupies residues 1083-1236 (MTEIEVDRFY…LVPFTAARPE (154 aa)). Asp-1143 acts as the Proton donor; for dehydratase activity in catalysis. A methyltransferase (MT) domain region spans residues 1376–1569 (FDFYDQGLGL…GFGGIDTSTP (194 aa)). Positions 2106–2277 (TYLLIGMSGQ…GVPGSAISIS (172 aa)) are ketoreductase (KR) domain. A Carrier 1 domain is found at 2386–2464 (QAATIIKDGF…ELLQEAMDRT (79 aa)). O-(pantetheine 4'-phosphoryl)serine is present on Ser-2424. The disordered stretch occupies residues 2482–2527 (PVTNTATPPPEVQVTGSASDSSRSLTPDGLSTSRPSTPVRTPMTEI). The segment covering 2495-2520 (VTGSASDSSRSLTPDGLSTSRPSTPV) has biased composition (polar residues). Positions 2553 to 2993 (PMSYGQARFW…DLPRWAGADV (441 aa)) are condensation (C) domain. An adenylation (A) (KR) domain region spans residues 3019-3424 (QMIGTYASKP…DGALFVHGRI (406 aa)). One can recognise a Carrier 2 domain in the interval 3542–3616 (ANMEGRVAAL…GMARHVRAAF (75 aa)). Position 3576 is an O-(pantetheine 4'-phosphoryl)serine (Ser-3576). The tract at residues 3725–3871 (ITDIVFHCAA…VRPVSDVATT (147 aa)) is reductase (RED) domain.

In the C-terminal section; belongs to the NRP synthetase family.

The protein operates within secondary metabolite biosynthesis. Hybrid PKS-NRPS synthetase; part of the gene cluster that mediates the biosynthesis of the trans-fused decalin-containing tetramic acid phomasetin, the stereochemical opposite of the HIV-1 integrase inhibitor equisetin. The PKS module of phm1 together with the enoylreductase phm4 catalyze the formation of the polyketide unit which is then conjugated to L-serine by the condensation domain of the phm1 NRPS module. Activity of the Dieckmann cyclase domain (RED) of phm1 results in release of the Dieckmann product intermediate. The Diels-Alderase phm7 then uses the Dieckmann product of phm1 as substrate and catalyzes the Diels-Alder cycloaddition to form the decalin ring of N-desmethylphomasetin. N-desmethylphomasetin is further methylated to phomasetin by the methyltransferase phm5. The sequence is that of Hybrid PKS-NRPS synthetase phm1 from Pyrenochaetopsis sp.